We begin with the raw amino-acid sequence, 425 residues long: Homogentisate 1,2-dioxygenase (425 aa).

Histidine 283 (proton acceptor) is an active-site residue. Histidine 326 and glutamate 332 together coordinate Fe cation. Homogentisate-binding residues include tyrosine 341 and histidine 362. Histidine 362 lines the Fe cation pocket.

Belongs to the homogentisate dioxygenase family. As to quaternary structure, hexamer; dimer of trimers. The cofactor is Fe cation.

The enzyme catalyses homogentisate + O2 = 4-maleylacetoacetate + H(+). The protein operates within amino-acid degradation; L-phenylalanine degradation; acetoacetate and fumarate from L-phenylalanine: step 4/6. Functionally, involved in the catabolism of homogentisate (2,5-dihydroxyphenylacetate or 2,5-OH-PhAc), a central intermediate in the degradation of phenylalanine and tyrosine. Catalyzes the oxidative ring cleavage of the aromatic ring of homogentisate to yield maleylacetoacetate. The sequence is that of Homogentisate 1,2-dioxygenase from Caulobacter vibrioides (strain ATCC 19089 / CIP 103742 / CB 15) (Caulobacter crescentus).